Here is a 311-residue protein sequence, read N- to C-terminus: Tyrosine recombinase XerD (311 aa).

The Core-binding (CB) domain maps to 3–88 (DMSAAYVEAF…ALRQFYKFLY (86 aa)). In terms of domain architecture, Tyr recombinase spans 109–298 (TLPKTLSIED…LEERLHDLVQ (190 aa)). Residues Arg156, Lys180, His250, Arg253, and His276 contribute to the active site. The active-site O-(3'-phospho-DNA)-tyrosine intermediate is the Tyr285.

It belongs to the 'phage' integrase family. XerD subfamily. Forms a cyclic heterotetrameric complex composed of two molecules of XerC and two molecules of XerD.

The protein resides in the cytoplasm. Site-specific tyrosine recombinase, which acts by catalyzing the cutting and rejoining of the recombining DNA molecules. The XerC-XerD complex is essential to convert dimers of the bacterial chromosome into monomers to permit their segregation at cell division. It also contributes to the segregational stability of plasmids. This chain is Tyrosine recombinase XerD, found in Rhizobium meliloti (strain 1021) (Ensifer meliloti).